Consider the following 163-residue polypeptide: Nucleotide-binding protein Noca_0564 (163 aa).

Belongs to the YajQ family.

In terms of biological role, nucleotide-binding protein. The sequence is that of Nucleotide-binding protein Noca_0564 from Nocardioides sp. (strain ATCC BAA-499 / JS614).